A 124-amino-acid chain; its full sequence is Modulator protein MzrA (124 aa).

Over 1 to 7 (MINRRMK) the chain is Cytoplasmic. Residues 8–28 (TGFVFHLLLLLLPLVVLVTSS) traverse the membrane as a helical segment. Residues 29-124 (RRTADDVTLH…KLSQQPFKLG (96 aa)) lie on the Periplasmic side of the membrane.

This sequence belongs to the MzrA family. As to quaternary structure, interacts with EnvZ.

The protein resides in the cell inner membrane. Its function is as follows. Modulates the activity of the EnvZ/OmpR two-component regulatory system, probably by directly modulating EnvZ enzymatic activity and increasing stability of phosphorylated OmpR. The sequence is that of Modulator protein MzrA from Musicola paradisiaca (strain Ech703) (Dickeya paradisiaca).